Reading from the N-terminus, the 487-residue chain is DNA ligase (487 aa).

The N6-AMP-lysine intermediate role is filled by Lys-159. Positions 164, 182, and 217 each coordinate ATP. Glu-217 contributes to the a divalent metal cation binding site. Positions 229-237 are interaction with the sliding clamp; the sequence is EGLDFLFDA. Glu-344 is an a divalent metal cation binding site. Residues Arg-359 and Lys-365 each contribute to the ATP site.

The protein belongs to the ATP-dependent DNA ligase family. In terms of assembly, interacts with the sliding clamp. A divalent metal cation is required as a cofactor.

It catalyses the reaction ATP + (deoxyribonucleotide)n-3'-hydroxyl + 5'-phospho-(deoxyribonucleotide)m = (deoxyribonucleotide)n+m + AMP + diphosphate.. DNA ligase, which is expressed in the early stage of lytic development, has been implicated in T4 DNA synthesis and genetic recombination. It may also play a role in T4 DNA repair. In Enterobacteria phage T4 (Bacteriophage T4), this protein is DNA ligase (30).